The sequence spans 201 residues: Large ribosomal subunit protein uL4 (201 aa).

Positions 43-66 are disordered; that stretch reads TRAQKTRSEVSGGGKKPWRQKGTG.

Belongs to the universal ribosomal protein uL4 family. Part of the 50S ribosomal subunit.

One of the primary rRNA binding proteins, this protein initially binds near the 5'-end of the 23S rRNA. It is important during the early stages of 50S assembly. It makes multiple contacts with different domains of the 23S rRNA in the assembled 50S subunit and ribosome. Its function is as follows. Forms part of the polypeptide exit tunnel. This Tolumonas auensis (strain DSM 9187 / NBRC 110442 / TA 4) protein is Large ribosomal subunit protein uL4.